A 155-amino-acid polypeptide reads, in one-letter code: 6,7-dimethyl-8-ribityllumazine synthase (155 aa).

5-amino-6-(D-ribitylamino)uracil is bound by residues phenylalanine 23, 57-59 (AFE), and 81-83 (AVI). Position 86 to 87 (86 to 87 (ST)) interacts with (2S)-2-hydroxy-3-oxobutyl phosphate. The active-site Proton donor is histidine 89. Phenylalanine 114 provides a ligand contact to 5-amino-6-(D-ribitylamino)uracil. Position 128 (arginine 128) interacts with (2S)-2-hydroxy-3-oxobutyl phosphate.

This sequence belongs to the DMRL synthase family.

It carries out the reaction (2S)-2-hydroxy-3-oxobutyl phosphate + 5-amino-6-(D-ribitylamino)uracil = 6,7-dimethyl-8-(1-D-ribityl)lumazine + phosphate + 2 H2O + H(+). Its pathway is cofactor biosynthesis; riboflavin biosynthesis; riboflavin from 2-hydroxy-3-oxobutyl phosphate and 5-amino-6-(D-ribitylamino)uracil: step 1/2. Functionally, catalyzes the formation of 6,7-dimethyl-8-ribityllumazine by condensation of 5-amino-6-(D-ribitylamino)uracil with 3,4-dihydroxy-2-butanone 4-phosphate. This is the penultimate step in the biosynthesis of riboflavin. The polypeptide is 6,7-dimethyl-8-ribityllumazine synthase (Geobacter sp. (strain M21)).